Here is a 78-residue protein sequence, read N- to C-terminus: Protein SlyX homolog (78 aa).

This sequence belongs to the SlyX family.

The sequence is that of Protein SlyX homolog from Xanthomonas oryzae pv. oryzae (strain MAFF 311018).